The primary structure comprises 160 residues: Cytochrome b6-f complex subunit 4 (160 aa).

A run of 3 helical transmembrane segments spans residues 36 to 56 (IFYM…GLAV), 96 to 116 (LGVL…FIKI), and 131 to 151 (TVFL…ALPI).

It belongs to the cytochrome b family. PetD subfamily. As to quaternary structure, the 4 large subunits of the cytochrome b6-f complex are cytochrome b6, subunit IV (17 kDa polypeptide, petD), cytochrome f and the Rieske protein, while the 4 small subunits are petG, petL, petM and petN. The complex functions as a dimer.

The protein resides in the plastid. Its subcellular location is the chloroplast thylakoid membrane. In terms of biological role, component of the cytochrome b6-f complex, which mediates electron transfer between photosystem II (PSII) and photosystem I (PSI), cyclic electron flow around PSI, and state transitions. This is Cytochrome b6-f complex subunit 4 from Auxenochlorella protothecoides (Green microalga).